We begin with the raw amino-acid sequence, 462 residues long: Flavin-containing monooxygenase FMO GS-OX3 (462 aa).

17–22 serves as a coordination point for FAD; the sequence is GAGPAG. 212–217 contributes to the NADP(+) binding site; sequence GNFASG. Residues 318–338 traverse the membrane as a helical segment; sequence ALAPGLAFVGLPAMGIVFVMF.

The protein belongs to the FMO family.

The protein localises to the membrane. It carries out the reaction a (Z)-omega-(methylsulfanyl)-N-sulfo-alkylhydroximate S-glucoside + NADPH + O2 + H(+) = a (Z)-omega-(methylsulfinyl)-alkyl-glucosinolate + NADP(+) + H2O. Functionally, catalyzes the conversion of methylthioalkyl glucosinolates of any chain length into methylsulfinylalkyl glucosinolates. Prefers probably short-chain methylthioalkyl glucosinolates in cv. Landsberg erecta. This Arabidopsis thaliana (Mouse-ear cress) protein is Flavin-containing monooxygenase FMO GS-OX3 (FMOGS-OX3).